The chain runs to 300 residues: 4-hydroxy-tetrahydrodipicolinate synthase (300 aa).

Thr-55 provides a ligand contact to pyruvate. Tyr-143 acts as the Proton donor/acceptor in catalysis. Lys-171 acts as the Schiff-base intermediate with substrate in catalysis. Ile-211 is a binding site for pyruvate.

This sequence belongs to the DapA family. Homotetramer; dimer of dimers.

The protein resides in the cytoplasm. It carries out the reaction L-aspartate 4-semialdehyde + pyruvate = (2S,4S)-4-hydroxy-2,3,4,5-tetrahydrodipicolinate + H2O + H(+). It functions in the pathway amino-acid biosynthesis; L-lysine biosynthesis via DAP pathway; (S)-tetrahydrodipicolinate from L-aspartate: step 3/4. Functionally, catalyzes the condensation of (S)-aspartate-beta-semialdehyde [(S)-ASA] and pyruvate to 4-hydroxy-tetrahydrodipicolinate (HTPA). The polypeptide is 4-hydroxy-tetrahydrodipicolinate synthase (Mycobacterium bovis (strain ATCC BAA-935 / AF2122/97)).